Reading from the N-terminus, the 1026-residue chain is Beta-galactosidase (1026 aa).

Residues N104 and D203 each contribute to the substrate site. Residue D203 coordinates Na(+). Mg(2+) is bound by residues E418, H420, and E463. Residues E463 and 539-542 contribute to the substrate site; that span reads EYAH. E463 functions as the Proton donor in the catalytic mechanism. The active-site Nucleophile is E539. N599 contributes to the Mg(2+) binding site. Positions 603 and 606 each coordinate Na(+). Substrate is bound by residues N606 and W1002.

This sequence belongs to the glycosyl hydrolase 2 family. In terms of assembly, homotetramer. Requires Mg(2+) as cofactor. It depends on Na(+) as a cofactor.

It catalyses the reaction Hydrolysis of terminal non-reducing beta-D-galactose residues in beta-D-galactosides.. The protein is Beta-galactosidase of Erwinia tasmaniensis (strain DSM 17950 / CFBP 7177 / CIP 109463 / NCPPB 4357 / Et1/99).